Reading from the N-terminus, the 768-residue chain is Valine--tRNA ligase (768 aa).

A 'HIGH' region motif is present at residues 37-47 (PTVSGKMHMGH). The short motif at 510-514 (KMSKS) is the 'KMSKS' region element. Lys-513 contacts ATP.

Belongs to the class-I aminoacyl-tRNA synthetase family. ValS type 2 subfamily.

It localises to the cytoplasm. It catalyses the reaction tRNA(Val) + L-valine + ATP = L-valyl-tRNA(Val) + AMP + diphosphate. Functionally, catalyzes the attachment of valine to tRNA(Val). As ValRS can inadvertently accommodate and process structurally similar amino acids such as threonine, to avoid such errors, it has a 'posttransfer' editing activity that hydrolyzes mischarged Thr-tRNA(Val) in a tRNA-dependent manner. In Picrophilus torridus (strain ATCC 700027 / DSM 9790 / JCM 10055 / NBRC 100828 / KAW 2/3), this protein is Valine--tRNA ligase.